A 446-amino-acid chain; its full sequence is Neuraminidase (446 aa).

Residues 13-65 are hypervariable stalk region; the sequence is HFNQYECDSLADNQVMPCEPIIIERNITEIIYLTNTTIEKEICPKLMEYRNWS. N-linked (GlcNAc...) asparagine; by host glycosylation is found at Asn-38, Asn-47, and Asn-63. The interval 68 to 446 is head of neuraminidase; it reads QCKITGFAPF…DGANINFMPI (379 aa). Intrachain disulfides connect Cys-69–Cys-394, Cys-101–Cys-106, Cys-160–Cys-207, Cys-209–Cys-214, Cys-255–Cys-268, Cys-257–Cys-266, Cys-295–Cys-314, and Cys-398–Cys-424. Arg-95 contributes to the substrate binding site. Asn-123 carries N-linked (GlcNAc...) asparagine; by host glycosylation. The active-site Proton donor/acceptor is Asp-128. Arg-129 is a binding site for substrate. Residues Asn-177 and Asn-211 are each glycosylated (N-linked (GlcNAc...) asparagine; by host). A substrate-binding site is contributed by 253–254; it reads EE. Residue Arg-269 coordinates substrate. Asp-270, Gly-274, and Asp-301 together coordinate Ca(2+). Residues 304–327 are disordered; it reads RNNDRSSSSDCKNPNNDKGNHGVK. Positions 308–320 are enriched in polar residues; the sequence is RSSSSDCKNPNND. Arg-348 is a binding site for substrate. Asn-379 is a glycosylation site (N-linked (GlcNAc...) asparagine; by host). Tyr-383 (nucleophile) is an active-site residue.

Belongs to the glycosyl hydrolase 34 family. As to quaternary structure, homotetramer. The cofactor is Ca(2+). Post-translationally, N-glycosylated.

The protein localises to the virion membrane. Its subcellular location is the host apical cell membrane. It catalyses the reaction Hydrolysis of alpha-(2-&gt;3)-, alpha-(2-&gt;6)-, alpha-(2-&gt;8)- glycosidic linkages of terminal sialic acid residues in oligosaccharides, glycoproteins, glycolipids, colominic acid and synthetic substrates.. Inhibited by the neuraminidase inhibitors zanamivir (Relenza) and oseltamivir (Tamiflu). These drugs interfere with the release of progeny virus from infected cells and are effective against all influenza strains. Resistance to neuraminidase inhibitors is quite rare. Functionally, catalyzes the removal of terminal sialic acid residues from viral and cellular glycoconjugates. Cleaves off the terminal sialic acids on the glycosylated HA during virus budding to facilitate virus release. Additionally helps virus spread through the circulation by further removing sialic acids from the cell surface. These cleavages prevent self-aggregation and ensure the efficient spread of the progeny virus from cell to cell. Otherwise, infection would be limited to one round of replication. Described as a receptor-destroying enzyme because it cleaves a terminal sialic acid from the cellular receptors. May facilitate viral invasion of the upper airways by cleaving the sialic acid moieties on the mucin of the airway epithelial cells. Likely to plays a role in the budding process through its association with lipid rafts during intracellular transport. May additionally display a raft-association independent effect on budding. Plays a role in the determination of host range restriction on replication and virulence. Sialidase activity in late endosome/lysosome traffic seems to enhance virus replication. This chain is Neuraminidase, found in Influenza A virus (strain A/Swine/Hong Kong/127/1982 H3N2).